Consider the following 396-residue polypeptide: Argininosuccinate synthase (396 aa).

9 to 17 (AYSGGLDTS) contacts ATP. Tyr85 lines the L-citrulline pocket. ATP is bound at residue Gly115. 3 residues coordinate L-aspartate: Thr117, Asn121, and Asp122. Asn121 serves as a coordination point for L-citrulline. 4 residues coordinate L-citrulline: Arg125, Ser173, Glu258, and Tyr270.

It belongs to the argininosuccinate synthase family. Type 1 subfamily. In terms of assembly, homotetramer.

The protein localises to the cytoplasm. It catalyses the reaction L-citrulline + L-aspartate + ATP = 2-(N(omega)-L-arginino)succinate + AMP + diphosphate + H(+). It participates in amino-acid biosynthesis; L-arginine biosynthesis; L-arginine from L-ornithine and carbamoyl phosphate: step 2/3. This Streptococcus agalactiae serotype V (strain ATCC BAA-611 / 2603 V/R) protein is Argininosuccinate synthase.